The primary structure comprises 261 residues: Follistatin-related protein 3 (261 aa).

The first 26 residues, 1–26 (MRPRAPGPLWPLPWGALAWAVGFVGS), serve as a signal peptide directing secretion. One can recognise a TB domain in the interval 36-107 (GVCWLQQGRE…SCEGVECGPG (72 aa)). Cystine bridges form between Cys38–Cys61, Cys48–Cys92, Cys62–Cys95, Cys99–Cys110, Cys104–Cys119, Cys121–Cys153, Cys125–Cys146, and Cys135–Cys167. N-linked (GlcNAc...) asparagine glycosylation is present at Asn73. Residues 99-119 (CEGVECGPGKACRMLGGRPRC) form the Follistatin-like 1 domain. Kazal-like domains are found at residues 113–169 (LGGR…RCRK) and 189–245 (SAHC…SCAG). In terms of domain architecture, Follistatin-like 2 spans 170-193 (SCAHVVCLRPQSCVVDQTGSAHCV). Intrachain disulfides connect Cys195–Cys229, Cys200–Cys222, and Cys211–Cys243. Residue Asn215 is glycosylated (N-linked (GlcNAc...) asparagine). A disordered region spans residues 242-261 (SCAGTPEPLDPESEEEENFV). A compositionally biased stretch (acidic residues) spans 250-261 (LDPESEEEENFV).

Interacts with INHBA and INHBB. Interacts with FN1. Interacts with ADAM12. Interacts with MLLT10; the interaction enhances MLLT10 in vitro transcriptional activity and self-association. Interacts with MSTN.

The protein localises to the secreted. It is found in the nucleus. In terms of biological role, the secreted form is a binding and antagonizing protein for members of the TGF-beta family, such as activin, BMP2 and MSTN. Inhibits activin A-, activin B-, BMP2- and MSDT-induced cellular signaling; more effective on activin A than on activin B. Involved in bone formation; inhibits osteoclast differentiation. Involved in hematopoiesis; involved in differentiation of hemopoietic progenitor cells, increases hematopoietic cell adhesion to fibronectin and seems to contribute to the adhesion of hematopoietic precursor cells to the bone marrow stroma. The nuclear form is probably involved in transcriptional regulation via interaction with MLLT10. The protein is Follistatin-related protein 3 (FSTL3) of Bos taurus (Bovine).